The primary structure comprises 1403 residues: MSEVQGTVEFSVELHKFYNVDLFQRGYYQIRVTLKVSSRIPHRLSASIVGQSESSSLHSACVHESAVHSRVFQILYRNEEVSINDAMLFRVHLLLDGERVEDALSEVEFQLKVDLHFTDSEQQLRDVTGTPMISSRTLGLHFHPRRGLHHQVPVMFDYFHLSVISVAIHAALVALQQPLISFTRPGRGSWLGKGGPDTGPEQPTISLENLVFGAGYCKPTSSEGSFYVPSENCIQHAHKWHRDLCLLLLHAYQGLRLYFLVIMRDIPELPTMELEALAVEETLSQLCSELQMLNNPEKIAEQISKDLAWLASHLMALWTQFLDTVTLHSQVTTYLTQEHHTLRVRRFSEAFFYMEHQKLAVLTFQENLIQTHSQLSLDIRNSEYLTSMPPLPAECLDIDGDWNTLPVIFEDRYVDCPVSGHNLSVYPNFDVPVTSPAIMNLKGKEKNLINQNSSSRKDIPLSTTEAPQLGSDEDVTRRPEVQENVSTWNPIDVCSESQVYLTIGEFQNRAGIPEDECWTGPRPDAVKDSLTDTDICSRSPGPDEGQTPALTYIDVQSSNKYCPRAELVQGINVQHEHRSSRESYGIVKTVPSKVVAGTSQNNSTSLNQTAALELRTLGRGVNQDGKPVLLSLKLTPAEPCDPPSTALREALDTKPSQPDHAEEPEDLSALSGVIKRSASIISDSGIESEPSSVAWSEARSRALELPSDRDVLHQVVRRHAHHRNSLEGGHTESNTSLPSGIQASLSSISSLPFEEEERELALNKLTKSVSAPQISSPEESAEGADTIKNTAGFSEDLDPSSKENSPPRHTSLSYGGSRVQDVRAGHSLADIALDSDRPQGPGYMDIPNDKGNHPELQEPCCLDGMAETPLHVETKGLNLKIPCTIVLENSKSRSFHRAAGETAKGKPEELSMSKCVLSNNSISEVRAASHHRVPEISCSPAVEAVNLNSTGVQNSSLSVNDTMTLNRRHNASLEAKHEAGTVCPTVTHTIASQVSRNQELKTGTSISGSHLNSTEAFTLDSLKAVEVVNLSVSCTATCLPFSSVPKETPARAGLSSKQNPAPITHQPLGSFGVVSTYSSKLEEEVSERMFSFYQAKEKFKKELKIEGFLYSDLSVLASDIPYFPPEEEEENLEDGIHLVVCVHGLDGNSADLRLVKTFIELGLPGGKLDFLMSEKNQTDTFADFDTMTDRLLDEIIQHIQLYNLSISRISFIGHSLGNIIIRSVLTRPRFRYYLNKLHTFLSLSGPHLGTLYNNSTLVSTGLWLMQKLKKSGSLLQLTFRDNADLRKCFLYQLSQKTGLQYFKNVVLVASPQDRYVPFHSARIEMCKTALKDRHTGPVYAEMINNLLGPLVEAKDCTLIRHNVFHALPNTANTLIGRAAHIAVLDSELFLEKFFLVAGLNYFK.

Disordered stretches follow at residues 445–483 (EKNL…EVQE), 514–548 (EDEC…GQTP), 648–669 (REAL…DLSA), and 718–740 (RHAH…LPSG). Basic and acidic residues predominate over residues 649–661 (EALDTKPSQPDHA). A compositionally biased stretch (polar residues) spans 731 to 740 (TESNTSLPSG). 2 positions are modified to phosphoserine: Ser775 and Ser776. The disordered stretch occupies residues 790–819 (TAGFSEDLDPSSKENSPPRHTSLSYGGSRV). A compositionally biased stretch (polar residues) spans 802 to 814 (KENSPPRHTSLSY).

It belongs to the FAM135 family.

This Mus musculus (Mouse) protein is Protein FAM135B (Fam135b).